The primary structure comprises 94 residues: Large ribosomal subunit protein uL23 (94 aa).

This sequence belongs to the universal ribosomal protein uL23 family. Part of the 50S ribosomal subunit. Contacts protein L29, and trigger factor when it is bound to the ribosome.

In terms of biological role, one of the early assembly proteins it binds 23S rRNA. One of the proteins that surrounds the polypeptide exit tunnel on the outside of the ribosome. Forms the main docking site for trigger factor binding to the ribosome. The sequence is that of Large ribosomal subunit protein uL23 from Dehalococcoides mccartyi (strain ATCC BAA-2100 / JCM 16839 / KCTC 5957 / BAV1).